The following is a 516-amino-acid chain: MVHARRHETRKNSKTQVPEQKSRVDWRRTKRSVSQLFDSDEELDSDEEIGSDEDLDGGESIDSDGKLDISKDSGINEIPEKETELNLIKVESERSNSKCHMNTSSSSADEEEMNKTKHNDLPDDEAHPGQAEGHHNKLTGQVLEEDVEDECIKPGKRKRLSSVMYDSDESDDSDILVRKASAKHPRRVVEDECSSLEMERETPEKSPAARKREYHQKLQELCERSRQKQRHNSGRNCESSEKDSCSSTDEDEDDDDYGDAENEDDYMIDDFVVGDEEADEENKNQGENLTTSQLKLVKQNSLYSFSDHYTHFERVVKALLINAFDGSFLETLYAGKRKKSYAQDMLTSLHYLDDRFIQPRLESLVSRSRWREQYKERVESYSDLSIHWKSPENCGCQACGLHRYCKFSVRLSGKLYNTRTMETDDFMSRDKQVFIVGRICAERTKIYHKLKHFKFKLYQDCCSIAYTKEVGDEQVKDTVKRLFCQLKKSGWIRKKHGQLEEYLNSADYFQDEKFKL.

The span at Met1–Ser13 shows a compositional bias: basic residues. Positions Met1–Asp265 are disordered. A compositionally biased stretch (acidic residues) spans Asp38–Asp62. Positions Ile78–Asn96 are enriched in basic and acidic residues. The segment covering Lys98 to Ser107 has biased composition (polar residues). Residues Met113–His135 are compositionally biased toward basic and acidic residues. 2 positions are modified to phosphoserine: Ser170 and Ser194. Residue Thr202 is modified to Phosphothreonine. Positions Glu204–Asn232 form a coiled coil. Residues His215–Arg226 show a composition bias toward basic and acidic residues. Residues Thr248–Asp265 show a composition bias toward acidic residues. Ser301 bears the Phosphoserine mark.

The sequence is that of Coiled-coil domain-containing protein 82 (Ccdc82) from Rattus norvegicus (Rat).